The following is a 606-amino-acid chain: UvrABC system protein C (606 aa).

A GIY-YIG domain is found at 19-97 (QSCGVYQMIG…IKSLKPPYNI (79 aa)). The 36-residue stretch at 207 to 242 (EKVKKQLSSTMEKCSKEENYELAAIYRDRLKFLEQI) folds into the UVR domain.

It belongs to the UvrC family. As to quaternary structure, interacts with UvrB in an incision complex.

Its subcellular location is the cytoplasm. Its function is as follows. The UvrABC repair system catalyzes the recognition and processing of DNA lesions. UvrC both incises the 5' and 3' sides of the lesion. The N-terminal half is responsible for the 3' incision and the C-terminal half is responsible for the 5' incision. This chain is UvrABC system protein C, found in Wolbachia sp. subsp. Brugia malayi (strain TRS).